Consider the following 372-residue polypeptide: Aminomethyltransferase (372 aa).

Belongs to the GcvT family. In terms of assembly, the glycine cleavage system is composed of four proteins: P, T, L and H.

It catalyses the reaction N(6)-[(R)-S(8)-aminomethyldihydrolipoyl]-L-lysyl-[protein] + (6S)-5,6,7,8-tetrahydrofolate = N(6)-[(R)-dihydrolipoyl]-L-lysyl-[protein] + (6R)-5,10-methylene-5,6,7,8-tetrahydrofolate + NH4(+). Its function is as follows. The glycine cleavage system catalyzes the degradation of glycine. This chain is Aminomethyltransferase, found in Burkholderia multivorans (strain ATCC 17616 / 249).